The following is a 644-amino-acid chain: Sentrin-specific protease 1 (644 aa).

The segment at 1-200 (MDDIADRMRM…REIYRQLLQM (200 aa)) is interaction with CCAR2. Ser-57, Ser-117, Ser-132, and Ser-157 each carry phosphoserine. The disordered stretch occupies residues 92 to 117 (QSANGQWRNSTPSSSSSLQKSRNSRS). Residues 99–117 (RNSTPSSSSSLQKSRNSRS) show a composition bias toward low complexity. 2 disordered regions span residues 156-184 (PSPS…TAEE) and 283-312 (SKDS…NTQS). The Nuclear localization signal motif lies at 171–177 (PKKTQRR). Residues 450–613 (LTITRKDIQT…GMFACKYADC (164 aa)) form a protease region. Residues His-533 and Asp-550 contribute to the active site. The Nuclear localization signal signature appears at 574 to 577 (KKRK). The active-site Nucleophile is Cys-603. The Nuclear localization signal motif lies at 628 to 634 (PYFRKRM). The Nuclear export signal signature appears at 635–644 (VWEILHRKLL).

It belongs to the peptidase C48 family. Interacts with RBM33; promoting ALKBH5 desumoylation and subsequent activation. In terms of tissue distribution, highly expressed in testis. Expressed at lower levels in thymus, pancreas, spleen, liver, ovary and small intestine.

The protein resides in the nucleus. The protein localises to the cytoplasm. Functionally, protease that catalyzes two essential functions in the SUMO pathway. The first is the hydrolysis of an alpha-linked peptide bond at the C-terminal end of the small ubiquitin-like modifier (SUMO) propeptides, SUMO1, SUMO2 and SUMO3 leading to the mature form of the proteins. The second is the deconjugation of SUMO1, SUMO2 and SUMO3 from targeted proteins, by cleaving an epsilon-linked peptide bond between the C-terminal glycine of the mature SUMO and the lysine epsilon-amino group of the target protein. Deconjugates SUMO1 from HIPK2. Deconjugates SUMO1 from HDAC1 and BHLHE40/DEC1, which decreases its transcriptional repression activity. Deconjugates SUMO1 from CLOCK, which decreases its transcriptional activation activity. Deconjugates SUMO2 from MTA1. Inhibits N(6)-methyladenosine (m6A) RNA methylation by mediating SUMO1 deconjugation from METTL3 and ALKBH5: METTL3 inhibits the m6A RNA methyltransferase activity, while ALKBH5 desumoylation promotes m6A demethylation. Desumoylates CCAR2 which decreases its interaction with SIRT1. Deconjugates SUMO1 from GPS2. This Homo sapiens (Human) protein is Sentrin-specific protease 1 (SENP1).